We begin with the raw amino-acid sequence, 365 residues long: 3-dehydroquinate synthase (365 aa).

Residues 107-111 (GVIGD), 131-132 (TT), lysine 144, and lysine 153 contribute to the NAD(+) site. Zn(2+) is bound by residues glutamate 186, histidine 251, and histidine 268.

This sequence belongs to the sugar phosphate cyclases superfamily. Dehydroquinate synthase family. It depends on Co(2+) as a cofactor. Zn(2+) is required as a cofactor. Requires NAD(+) as cofactor.

It localises to the cytoplasm. It catalyses the reaction 7-phospho-2-dehydro-3-deoxy-D-arabino-heptonate = 3-dehydroquinate + phosphate. It participates in metabolic intermediate biosynthesis; chorismate biosynthesis; chorismate from D-erythrose 4-phosphate and phosphoenolpyruvate: step 2/7. Catalyzes the conversion of 3-deoxy-D-arabino-heptulosonate 7-phosphate (DAHP) to dehydroquinate (DHQ). This is 3-dehydroquinate synthase from Picosynechococcus sp. (strain ATCC 27264 / PCC 7002 / PR-6) (Agmenellum quadruplicatum).